A 587-amino-acid chain; its full sequence is Phosphatidylinositol-3-phosphatase SAC1 (587 aa).

The Cytoplasmic portion of the chain corresponds to 1–520 (MAATAYEHLK…SPLSVPRDWK (520 aa)). The 330-residue stretch at 122 to 451 (LNHVLSTDGF…ANACAKQYAG (330 aa)) folds into the SAC domain. The tract at residues 452–587 (TGALKTDFTR…PRLVQKEKID (136 aa)) is essential for phosphatidylinositol-4-phosphate phosphatase activity. Residue Lys-456 is modified to N6-acetyllysine. Residues 521 to 541 (FLALPIIMVVAFSMCIICLLM) traverse the membrane as a helical segment. Over 542-548 (AGDTWTE) the chain is Lumenal. A helical transmembrane segment spans residues 549 to 569 (TLAYVLFWGVASIGTFFIILY). The Cytoplasmic segment spans residues 570–587 (NGKDFVDAPRLVQKEKID).

In terms of assembly, interacts with TMEM39A. Interacts with SEC23A and SEC24A; this interaction is reduced in the absence of TMEM39A. Interacts with PLEKHA3 and VAPA and/or VAPB to form a ternary complex. As to expression, detected in spleen, lung, liver, skeletal muscle, kidney, testis and in cerebellar Purkinje cells (at protein level). Ubiquitous. Highly expressed in brain, spleen, liver and kidney.

Its subcellular location is the endoplasmic reticulum membrane. The protein localises to the golgi apparatus membrane. The catalysed reaction is a 1,2-diacyl-sn-glycero-3-phospho-(1D-myo-inositol-3-phosphate) + H2O = a 1,2-diacyl-sn-glycero-3-phospho-(1D-myo-inositol) + phosphate. It catalyses the reaction a 1,2-diacyl-sn-glycero-3-phospho-(1D-myo-inositol 4-phosphate) + H2O = a 1,2-diacyl-sn-glycero-3-phospho-(1D-myo-inositol) + phosphate. Phosphoinositide phosphatase which catalyzes the hydrolysis of phosphatidylinositol 4-phosphate (PtdIns(4)P), phosphatidylinositol 3-phosphate (PtdIns(3)P) and has low activity towards phosphatidylinositol-3,5-bisphosphate (PtdIns(3,5)P2). Shows a very robust PtdIns(4)P phosphatase activity when it binds PtdIns(4)P in a 'cis' configuration in the cellular environment, with much less activity seen when it binds PtdIns(4)P in 'trans' configuration. PtdIns(4)P phosphatase activity (when it binds PtdIns(4)P in 'trans' configuration) is enhanced in the presence of PLEKHA3. The sequence is that of Phosphatidylinositol-3-phosphatase SAC1 (Sacm1l) from Rattus norvegicus (Rat).